A 156-amino-acid chain; its full sequence is Small ribosomal subunit protein uS7 (156 aa).

It belongs to the universal ribosomal protein uS7 family. Part of the 30S ribosomal subunit. Contacts proteins S9 and S11.

Its function is as follows. One of the primary rRNA binding proteins, it binds directly to 16S rRNA where it nucleates assembly of the head domain of the 30S subunit. Is located at the subunit interface close to the decoding center, probably blocks exit of the E-site tRNA. This chain is Small ribosomal subunit protein uS7, found in Aeromonas hydrophila subsp. hydrophila (strain ATCC 7966 / DSM 30187 / BCRC 13018 / CCUG 14551 / JCM 1027 / KCTC 2358 / NCIMB 9240 / NCTC 8049).